A 386-amino-acid polypeptide reads, in one-letter code: Cytotoxic granule associated RNA binding protein TIA1 (386 aa).

M1 bears the N-acetylmethionine mark. RRM domains are found at residues 7-83 (KTLY…WATT), 106-184 (FHVF…WATR), and 214-286 (CTVY…WGKE). Residues 354–386 (MGPNYGVQPPQGQNGSMLPNQPSGYRVAGYETQ) form a disordered region. Over residues 363-376 (PQGQNGSMLPNQPS) the composition is skewed to polar residues.

As to quaternary structure, homooligomer; homooligomerization is induced by Zn(2+). Interacts with FASTK; the interactions leads to its phosphorylation. Interacts (via RRM1 and the C-terminal glutamine-rich (Q) sequence) with SNRPC/U1-C (via N-terminus); thereby facilitating spliceosomal U1 snRNP recruitment to 5' splice sites. Phosphorylated by FASTK; phosphorylation occurs after FAS ligation in FAS-mediated apoptosis and before DNA fragmentation. As to expression, expressed in heart, small intestine, kidney, liver, lung, skeletal muscle, testes, pancreas, and ovary (at protein level).

The protein resides in the nucleus. It is found in the cytoplasm. The protein localises to the stress granule. Its function is as follows. RNA-binding protein involved in the regulation of alternative pre-RNA splicing and mRNA translation by binding to uridine-rich (U-rich) RNA sequences. Binds to U-rich sequences immediately downstream from a 5' splice sites in a uridine-rich small nuclear ribonucleoprotein (U snRNP)-dependent fashion, thereby modulating alternative pre-RNA splicing. Preferably binds to the U-rich IAS1 sequence in a U1 snRNP-dependent manner; this binding is optimal if a 5' splice site is adjacent to IAS1. Activates the use of heterologous 5' splice sites; the activation depends on the intron sequence downstream from the 5' splice site, with a preference for a downstream U-rich sequence. By interacting with SNRPC/U1-C, promotes recruitment and binding of spliceosomal U1 snRNP to 5' splice sites followed by U-rich sequences, thereby facilitating atypical 5' splice site recognition by U1 snRNP. Activates splicing of alternative exons with weak 5' splice sites followed by a U-rich stretch on its own pre-mRNA and on TIAR mRNA. Acts as a modulator of alternative splicing for the apoptotic FAS receptor, thereby promoting apoptosis. Binds to the 5' splice site region of FAS intron 5 to promote accumulation of transcripts that include exon 6 at the expense of transcripts in which exon 6 is skipped, thereby leading to the transcription of a membrane-bound apoptotic FAS receptor, which promotes apoptosis. Binds to a conserved AU-rich cis element in COL2A1 intron 2 and modulates alternative splicing of COL2A1 exon 2. Also binds to the equivalent AT-rich element in COL2A1 genomic DNA, and may thereby be involved in the regulation of transcription. Binds specifically to a polypyrimidine-rich controlling element (PCE) located between the weak 5' splice site and the intronic splicing silencer of CFTR mRNA to promote exon 9 inclusion, thereby antagonizing PTB1 and its role in exon skipping of CFTR exon 9. Involved in the repression of mRNA translation by binding to AU-rich elements (AREs) located in mRNA 3' untranslated regions (3' UTRs), including target ARE-bearing mRNAs encoding TNF and PTGS2. Also participates in the cellular response to environmental stress, by acting downstream of the stress-induced phosphorylation of EIF2S1/EIF2A to promote the recruitment of untranslated mRNAs to cytoplasmic stress granules (SGs), leading to stress-induced translational arrest. Formation and recruitment to SGs is regulated by Zn(2+). Possesses nucleolytic activity against cytotoxic lymphocyte target cells. Displays enhanced splicing regulatory activity compared with TIA isoform Long. In Homo sapiens (Human), this protein is Cytotoxic granule associated RNA binding protein TIA1 (TIA1).